Here is a 567-residue protein sequence, read N- to C-terminus: Laccase-3 (567 aa).

An N-terminal signal peptide occupies residues 1–24 (MASSSSSRLLFLLSCSVLALLAGA). Plastocyanin-like domains are found at residues 32-148 (IVQE…PREN) and 158-310 (REVP…YDCG). N-linked (GlcNAc...) asparagine glycosylation occurs at asparagine 78. The Cu cation site is built by histidine 82, histidine 84, histidine 127, and histidine 129. Asparagine 148, asparagine 187, asparagine 203, asparagine 298, asparagine 330, asparagine 379, and asparagine 389 each carry an N-linked (GlcNAc...) asparagine glycan. Residues 415–551 (DFPAYPPVQF…AMAFLVEDGY (137 aa)) enclose the Plastocyanin-like 3 domain. Cu cation contacts are provided by histidine 468, histidine 471, histidine 473, histidine 530, cysteine 531, histidine 532, and histidine 536.

This sequence belongs to the multicopper oxidase family. It depends on Cu cation as a cofactor.

Its subcellular location is the secreted. The protein resides in the extracellular space. The protein localises to the apoplast. It catalyses the reaction 4 hydroquinone + O2 = 4 benzosemiquinone + 2 H2O. Its function is as follows. Lignin degradation and detoxification of lignin-derived products. In Oryza sativa subsp. japonica (Rice), this protein is Laccase-3 (LAC3).